The sequence spans 238 residues: Leucyl/phenylalanyl-tRNA--protein transferase (238 aa).

Belongs to the L/F-transferase family.

It is found in the cytoplasm. The enzyme catalyses N-terminal L-lysyl-[protein] + L-leucyl-tRNA(Leu) = N-terminal L-leucyl-L-lysyl-[protein] + tRNA(Leu) + H(+). It carries out the reaction N-terminal L-arginyl-[protein] + L-leucyl-tRNA(Leu) = N-terminal L-leucyl-L-arginyl-[protein] + tRNA(Leu) + H(+). The catalysed reaction is L-phenylalanyl-tRNA(Phe) + an N-terminal L-alpha-aminoacyl-[protein] = an N-terminal L-phenylalanyl-L-alpha-aminoacyl-[protein] + tRNA(Phe). Functionally, functions in the N-end rule pathway of protein degradation where it conjugates Leu, Phe and, less efficiently, Met from aminoacyl-tRNAs to the N-termini of proteins containing an N-terminal arginine or lysine. This is Leucyl/phenylalanyl-tRNA--protein transferase from Psychromonas ingrahamii (strain DSM 17664 / CCUG 51855 / 37).